Consider the following 85-residue polypeptide: Large ribosomal subunit protein bL27 (85 aa).

The segment at 1 to 21 (MAHKKAAGSTKNGRDSNAKRL) is disordered.

This sequence belongs to the bacterial ribosomal protein bL27 family.

The polypeptide is Large ribosomal subunit protein bL27 (Hydrogenovibrio crunogenus (strain DSM 25203 / XCL-2) (Thiomicrospira crunogena)).